The following is a 316-amino-acid chain: Glutamyl endopeptidase (316 aa).

A signal peptide spans 1–30; that stretch reads MVSKKSVKRGLITGLIGISIYSLGMHPAQA. The propeptide occupies 31-94; it reads APSPHTPVSS…SPAKAPYSIK (64 aa). Cysteines 126 and 142 form a disulfide. Active-site charge relay system residues include His-141 and Ser-261. Cys-275 and Cys-279 are joined by a disulfide.

It belongs to the peptidase S1B family.

It localises to the secreted. The enzyme catalyses Preferential cleavage: Glu-|-Xaa, Asp-|-Xaa.. Functionally, specific for hydrolysis of peptide bonds on the carboxyl side of acidic amino acid residues, with a strong preference for Glu. This chain is Glutamyl endopeptidase (blaSE), found in Bacillus licheniformis (strain ATCC 14580 / DSM 13 / JCM 2505 / CCUG 7422 / NBRC 12200 / NCIMB 9375 / NCTC 10341 / NRRL NRS-1264 / Gibson 46).